The following is a 363-amino-acid chain: GTPase Obg (363 aa).

An Obg domain is found at 1–159; it reads MKFVDEAFID…KSLKLELKVL (159 aa). An OBG-type G domain is found at 160-341; the sequence is ADVGLLGRPN…LVHAIFGHVQ (182 aa). Residues 166–173, 191–195, 213–216, 291–294, and 322–324 contribute to the GTP site; these read GRPNAGKS, FTTLH, DIPG, NKLD, and SAL. Mg(2+)-binding residues include serine 173 and threonine 193. A disordered region spans residues 343-363; that stretch reads GQRMDNEPPPLDPRFASAGPA.

This sequence belongs to the TRAFAC class OBG-HflX-like GTPase superfamily. OBG GTPase family. As to quaternary structure, monomer. It depends on Mg(2+) as a cofactor.

The protein localises to the cytoplasm. Its function is as follows. An essential GTPase which binds GTP, GDP and possibly (p)ppGpp with moderate affinity, with high nucleotide exchange rates and a fairly low GTP hydrolysis rate. Plays a role in control of the cell cycle, stress response, ribosome biogenesis and in those bacteria that undergo differentiation, in morphogenesis control. In Verminephrobacter eiseniae (strain EF01-2), this protein is GTPase Obg.